We begin with the raw amino-acid sequence, 328 residues long: Tetraacyldisaccharide 4'-kinase (328 aa).

An ATP-binding site is contributed by 55 to 62 (TVGGNGKT).

The protein belongs to the LpxK family.

It carries out the reaction a lipid A disaccharide + ATP = a lipid IVA + ADP + H(+). The protein operates within glycolipid biosynthesis; lipid IV(A) biosynthesis; lipid IV(A) from (3R)-3-hydroxytetradecanoyl-[acyl-carrier-protein] and UDP-N-acetyl-alpha-D-glucosamine: step 6/6. Functionally, transfers the gamma-phosphate of ATP to the 4'-position of a tetraacyldisaccharide 1-phosphate intermediate (termed DS-1-P) to form tetraacyldisaccharide 1,4'-bis-phosphate (lipid IVA). The sequence is that of Tetraacyldisaccharide 4'-kinase from Hamiltonella defensa subsp. Acyrthosiphon pisum (strain 5AT).